The primary structure comprises 168 residues: Luminal-binding protein 3 (168 aa).

Asn-120 carries N-linked (GlcNAc...) asparagine glycosylation. Positions 148-168 (QRSGGASGGSSSSEEDGHDEL) are disordered. Positions 165-168 (HDEL) match the Prevents secretion from ER motif.

It belongs to the heat shock protein 70 family.

The protein resides in the endoplasmic reticulum lumen. Its function is as follows. Probably plays a role in facilitating the assembly of multimeric protein complexes inside the ER. The polypeptide is Luminal-binding protein 3 (BIP3) (Nicotiana tabacum (Common tobacco)).